We begin with the raw amino-acid sequence, 102 residues long: Small ribosomal subunit protein uS10 (102 aa).

Belongs to the universal ribosomal protein uS10 family. As to quaternary structure, part of the 30S ribosomal subunit.

Functionally, involved in the binding of tRNA to the ribosomes. This chain is Small ribosomal subunit protein uS10, found in Pelotomaculum thermopropionicum (strain DSM 13744 / JCM 10971 / SI).